A 292-amino-acid polypeptide reads, in one-letter code: tRNA-cytidine(32) 2-sulfurtransferase (292 aa).

The PP-loop motif motif lies at 53-58; it reads SGGKDS. The [4Fe-4S] cluster site is built by cysteine 128, cysteine 131, and cysteine 219.

It belongs to the TtcA family. As to quaternary structure, homodimer. It depends on Mg(2+) as a cofactor. Requires [4Fe-4S] cluster as cofactor.

The protein resides in the cytoplasm. It carries out the reaction cytidine(32) in tRNA + S-sulfanyl-L-cysteinyl-[cysteine desulfurase] + AH2 + ATP = 2-thiocytidine(32) in tRNA + L-cysteinyl-[cysteine desulfurase] + A + AMP + diphosphate + H(+). It functions in the pathway tRNA modification. Its function is as follows. Catalyzes the ATP-dependent 2-thiolation of cytidine in position 32 of tRNA, to form 2-thiocytidine (s(2)C32). The sulfur atoms are provided by the cysteine/cysteine desulfurase (IscS) system. The chain is tRNA-cytidine(32) 2-sulfurtransferase from Cereibacter sphaeroides (strain ATCC 17023 / DSM 158 / JCM 6121 / CCUG 31486 / LMG 2827 / NBRC 12203 / NCIMB 8253 / ATH 2.4.1.) (Rhodobacter sphaeroides).